Reading from the N-terminus, the 215-residue chain is Pyrrolidone-carboxylate peptidase (215 aa).

Active-site residues include Glu78, Cys141, and His165.

This sequence belongs to the peptidase C15 family. As to quaternary structure, homotetramer.

It is found in the cytoplasm. It carries out the reaction Release of an N-terminal pyroglutamyl group from a polypeptide, the second amino acid generally not being Pro.. In terms of biological role, removes 5-oxoproline from various penultimate amino acid residues except L-proline. This chain is Pyrrolidone-carboxylate peptidase, found in Streptococcus pyogenes serotype M3 (strain SSI-1).